Reading from the N-terminus, the 128-residue chain is Large-conductance mechanosensitive channel (128 aa).

2 consecutive transmembrane segments (helical) span residues 10-30 (FAMRGNVVDMAVGVIIGGAFG) and 76-96 (GLFIQNVFDFIIIAFAIFMMV).

The protein belongs to the MscL family. As to quaternary structure, homopentamer.

The protein resides in the cell inner membrane. Channel that opens in response to stretch forces in the membrane lipid bilayer. May participate in the regulation of osmotic pressure changes within the cell. The chain is Large-conductance mechanosensitive channel from Mannheimia succiniciproducens (strain KCTC 0769BP / MBEL55E).